We begin with the raw amino-acid sequence, 494 residues long: Gram-negative bacteria-binding protein 1 (494 aa).

A signal peptide spans 1–19; sequence MPGLCIGILLLIGFGCTTA. Residues 20–120 form the CBM39 domain; it reads YKIPTPTVEL…QPLPVCNLGG (101 aa). N-linked (GlcNAc...) asparagine glycans are attached at residues N56 and N81. The segment at 126–160 is disordered; the sequence is GCSPGDDDFTDDNQLSTEDSALEPTAPSVCEPSES. Positions 135–494 constitute a GH16 domain; that stretch reads TDDNQLSTED…DYVRVFATDN (360 aa). N185 carries an N-linked (GlcNAc...) asparagine glycan.

Belongs to the insect beta-1,3-glucan binding protein family.

It is found in the cell membrane. Plays a key role in innate immunity by acting as a pattern recognition receptor for beta-1,3-glucan from fungi and lipopolysaccharide from Gram-negative bacteria. Upon recognition of invading microorganism-derived products, acts upstream of protease spz processing enzyme SPE to activate the Toll pathway and to induce the expression of antimicrobial peptides drosomycin, cecropin and attacin. The chain is Gram-negative bacteria-binding protein 1 from Drosophila melanogaster (Fruit fly).